Here is a 477-residue protein sequence, read N- to C-terminus: Tyrosine--tRNA ligase, mitochondrial (477 aa).

Residues 1–16 (MAAPILRSFSWGRWSG) constitute a mitochondrion transit peptide. Tyr-77 is a binding site for L-tyrosine. An ATP-binding site is contributed by Asp-81. Positions 82–91 (PTADSLHVGH) match the 'HIGH' region motif. Residues Asp-121, Tyr-221, Gln-225, and Asp-228 each contribute to the L-tyrosine site. An ATP-binding site is contributed by 244–246 (GSD). An L-tyrosine-binding site is contributed by Gln-247. Positions 274 and 284 each coordinate ATP. The 'KMSKS' region motif lies at 281–285 (KLGKS). Residues Lys-355 and Lys-367 each carry the N6-acetyllysine modification.

The protein belongs to the class-I aminoacyl-tRNA synthetase family. As to quaternary structure, homodimer.

The protein resides in the mitochondrion matrix. The catalysed reaction is tRNA(Tyr) + L-tyrosine + ATP = L-tyrosyl-tRNA(Tyr) + AMP + diphosphate + H(+). Its function is as follows. Catalyzes the attachment of tyrosine to tRNA(Tyr) in a two-step reaction: tyrosine is first activated by ATP to form Tyr-AMP and then transferred to the acceptor end of tRNA(Tyr). This Homo sapiens (Human) protein is Tyrosine--tRNA ligase, mitochondrial (YARS2).